Reading from the N-terminus, the 555-residue chain is Sesquiterpene synthase 31 (555 aa).

Mg(2+)-binding residues include D308, D312, D451, T455, and E459. The DDXXD motif signature appears at 308–312 (DDTFD).

Belongs to the terpene synthase family. Tpsa subfamily. It depends on Mg(2+) as a cofactor. Requires Mn(2+) as cofactor. Expressed in stem and leaf trichomes. Detected in roots, fruits and flowers.

It localises to the cytoplasm. The catalysed reaction is (2E,6E)-farnesyl diphosphate = viridiflorene + diphosphate. Its pathway is secondary metabolite biosynthesis; terpenoid biosynthesis. In terms of biological role, sesquiterpene synthase involved in the production of viridiflorene from (E,E)-farnesyl diphosphate (FPP). Has no activity with (Z,Z)-FPP. Can act with a low efficiency as a monoterpene synthase with geranyl diphosphate as substrate. The protein is Sesquiterpene synthase 31 of Solanum lycopersicum (Tomato).